We begin with the raw amino-acid sequence, 551 residues long: RCC1 and BTB domain-containing protein 2 (551 aa).

RCC1 repeat units follow at residues 64-115 (NDEI…VLAT), 117-169 (DGEV…VLTS), 171-222 (GEVF…AVVD), 223-274 (TGEV…VLTD), 276-326 (GQIY…AAKT), and 328-382 (GGHV…TVAE). The BTB domain occupies 394 to 457 (ADLKFLVDGK…LYTDNISLSP (64 aa)).

In terms of tissue distribution, expressed in testis and heart (at protein level).

The protein localises to the cytoplasmic vesicle. It localises to the secretory vesicle. It is found in the acrosome. The chain is RCC1 and BTB domain-containing protein 2 (Rcbtb2) from Mus musculus (Mouse).